A 530-amino-acid polypeptide reads, in one-letter code: UDP-glucuronosyltransferase 2B31 (530 aa).

The N-terminal stretch at 1–24 (MSMKWISVLLGLQLSCYFSSGSCG) is a signal peptide. The residue at position 136 (Lys136) is an N6-succinyllysine. Asn316 carries an N-linked (GlcNAc...) asparagine glycan. The helical transmembrane segment at 495-515 (IGFLLACVATAIFVTTQCCLF) threads the bilayer.

This sequence belongs to the UDP-glycosyltransferase family.

The protein resides in the microsome membrane. The protein localises to the endoplasmic reticulum membrane. It carries out the reaction glucuronate acceptor + UDP-alpha-D-glucuronate = acceptor beta-D-glucuronoside + UDP + H(+). Functionally, UDPGTs are of major importance in the conjugation and subsequent elimination of potentially toxic xenobiotics and endogenous compounds. This isozyme has glucuronidating capacity on phenols, opioids, and carboxylic acid-containing drugs. In Canis lupus familiaris (Dog), this protein is UDP-glucuronosyltransferase 2B31 (UGT2B31).